Reading from the N-terminus, the 801-residue chain is Phenylalanine--tRNA ligase beta subunit (801 aa).

The 109-residue stretch at 39-147 (GGGLDQVVVA…SDLPLGVPLF (109 aa)) folds into the tRNA-binding domain. Residues 401–477 (VSHRTIRFRV…RLNGYDRIET (77 aa)) form the B5 domain. Mg(2+) contacts are provided by aspartate 455, aspartate 461, glutamate 464, and glutamate 465. In terms of domain architecture, FDX-ACB spans 708–801 (SRFPDTFRDI…LVAKLGATIR (94 aa)).

Belongs to the phenylalanyl-tRNA synthetase beta subunit family. Type 1 subfamily. In terms of assembly, tetramer of two alpha and two beta subunits. The cofactor is Mg(2+).

The protein resides in the cytoplasm. The enzyme catalyses tRNA(Phe) + L-phenylalanine + ATP = L-phenylalanyl-tRNA(Phe) + AMP + diphosphate + H(+). The chain is Phenylalanine--tRNA ligase beta subunit from Geobacter sulfurreducens (strain ATCC 51573 / DSM 12127 / PCA).